The chain runs to 230 residues: Ribonuclease 3 (230 aa).

The region spanning 10-133 is the RNase III domain; it reads DPRLLSRIGY…IIGAIYLDSS (124 aa). Glu-46 provides a ligand contact to Mg(2+). Residue Asp-50 is part of the active site. The Mg(2+) site is built by Asp-119 and Glu-122. Glu-122 is a catalytic residue. The DRBM domain maps to 161–230; the sequence is DPKSRLQEYL…AAEILKLLEQ (70 aa).

Belongs to the ribonuclease III family. In terms of assembly, homodimer. Mg(2+) is required as a cofactor.

It localises to the cytoplasm. It catalyses the reaction Endonucleolytic cleavage to 5'-phosphomonoester.. Functionally, digests double-stranded RNA. Involved in the processing of primary rRNA transcript to yield the immediate precursors to the large and small rRNAs (23S and 16S). Processes some mRNAs, and tRNAs when they are encoded in the rRNA operon. Processes pre-crRNA and tracrRNA of type II CRISPR loci if present in the organism. This is Ribonuclease 3 (rnc) from Acinetobacter baumannii (strain AB307-0294).